We begin with the raw amino-acid sequence, 324 residues long: Methyltransferase pytC (324 aa).

A disordered region spans residues 1–28; the sequence is MTVRTAAEPPNRIEVDMDAPSLDTDSSC.

It belongs to the methyltransferase superfamily. LaeA methyltransferase family.

The protein operates within secondary metabolite biosynthesis. Methyltransferase; part of the gene cluster that mediates the biosynthesis of pyranterreones, a family of antioxidative compounds. The first step of pyranonigrins biosynthesis is performed by the hybrid PKS-NRPS synthetase pytA that condenses 4 malonyl-CoA units ato the acetyl starter unit by the modular PKS of pytA. The acyl chain is then connected to an L-serine through the amide bond by the modular NRPS of pytA. A tetramic acid is formed and released from the PKS-NRPS pytA to give pyranterreone 5 with the help of the thioesterase pytI. Pyranterreone 5 could be methylated by pytC to afford pyranterreone 6. Both pyranterreones 5 and 6 are subsequently oxidized by the FAD-linked oxidoreductase pytB and the cytochrome P450 monooxygenase pytD to form the fused gamma-pyrone core, resulting in pyranterreones 7 and 11, respectively. The hydroxy group at C-8 of pyranterreones 7 and 11 are dehydrated by the aspartyl protease pytH to form a delta-7 double bond to give pyranterreones 3 and 1, 2 accordingly. The exo-methylene of pyranterreone 3 could be reduced into a pendant methyl by reductase pytE to provide pyranterreone 4, also known as cordylactam. Pyranterreone 4 can be reconverted to pyranterreone 3 through pytB-catalyzed dehydrogenation or further oxidized to pyranterreones 9 and 10. The chain is Methyltransferase pytC from Aspergillus terreus.